Consider the following 334-residue polypeptide: Anthranilate phosphoribosyltransferase (334 aa).

5-phospho-alpha-D-ribose 1-diphosphate-binding positions include glycine 79, 82-83 (GD), serine 87, 89-92 (NIST), 107-115 (KHGNRSISS), and serine 119. Glycine 79 contacts anthranilate. Serine 91 provides a ligand contact to Mg(2+). Asparagine 110 serves as a coordination point for anthranilate. Arginine 165 lines the anthranilate pocket. 2 residues coordinate Mg(2+): aspartate 224 and glutamate 225.

This sequence belongs to the anthranilate phosphoribosyltransferase family. As to quaternary structure, homodimer. Mg(2+) is required as a cofactor.

The catalysed reaction is N-(5-phospho-beta-D-ribosyl)anthranilate + diphosphate = 5-phospho-alpha-D-ribose 1-diphosphate + anthranilate. It participates in amino-acid biosynthesis; L-tryptophan biosynthesis; L-tryptophan from chorismate: step 2/5. Its function is as follows. Catalyzes the transfer of the phosphoribosyl group of 5-phosphorylribose-1-pyrophosphate (PRPP) to anthranilate to yield N-(5'-phosphoribosyl)-anthranilate (PRA). This Streptococcus gordonii (strain Challis / ATCC 35105 / BCRC 15272 / CH1 / DL1 / V288) protein is Anthranilate phosphoribosyltransferase.